We begin with the raw amino-acid sequence, 130 residues long: MYRAVTRGIEVSVEPFYLEDQSEPEENRYVWGYRITIANNSTETVQLRSRYWQITDANGYVEEVRGPGVVGEQPTLEPGDSFQYSSGCPLTTTSGVMVGRYQMQGNGGSLFEVDIPAFSLDIPEQRRTLN.

The ApaG domain maps to 3-127; that stretch reads RAVTRGIEVS…FSLDIPEQRR (125 aa).

The sequence is that of Protein ApaG from Brucella anthropi (strain ATCC 49188 / DSM 6882 / CCUG 24695 / JCM 21032 / LMG 3331 / NBRC 15819 / NCTC 12168 / Alc 37) (Ochrobactrum anthropi).